A 196-amino-acid polypeptide reads, in one-letter code: DnaA initiator-associating protein DiaA (196 aa).

The SIS domain maps to 34 to 196 (LVQSLLNGNK…DNTLFPHQDD (163 aa)).

This sequence belongs to the SIS family. DiaA subfamily. As to quaternary structure, homotetramer; dimer of dimers.

In terms of biological role, required for the timely initiation of chromosomal replication via direct interactions with the DnaA initiator protein. In Klebsiella pneumoniae (strain 342), this protein is DnaA initiator-associating protein DiaA.